Reading from the N-terminus, the 249-residue chain is Elongator complex protein 6 homolog (249 aa).

It belongs to the ELP6 family. As to quaternary structure, component of the elongator complex.

The protein localises to the cytoplasm. The protein resides in the nucleus. The protein operates within tRNA modification; 5-methoxycarbonylmethyl-2-thiouridine-tRNA biosynthesis. Functionally, component of the elongator complex which is required for multiple tRNA modifications, including mcm5U (5-methoxycarbonylmethyl uridine), mcm5s2U (5-methoxycarbonylmethyl-2-thiouridine), and ncm5U (5-carbamoylmethyl uridine). The elongator complex catalyzes formation of carboxymethyluridine in the wobble base at position 34 in tRNAs. The protein is Elongator complex protein 6 homolog of Schizosaccharomyces pombe (strain 972 / ATCC 24843) (Fission yeast).